A 65-amino-acid chain; its full sequence is Conotoxin Cal1.3 (65 aa).

The signal sequence occupies residues 1–18 (MRCLPVFIILLLLASTAA). A propeptide spanning residues 19–49 (VDVAGSKLKRRLERKPYQGSQAYVKKTAFGL) is cleaved from the precursor. Intrachain disulfides connect Cys52–Cys62 and Cys53–Cys59. 4-hydroxyproline is present on Pro61. Cys62 is subject to Cysteine amide.

Belongs to the conotoxin T superfamily. As to expression, expressed by the venom duct.

The protein localises to the secreted. Probable neurotoxin with unknown target. Possibly targets ion channels. The sequence is that of Conotoxin Cal1.3 from Californiconus californicus (California cone).